A 697-amino-acid chain; its full sequence is Zinc finger protein 12 (697 aa).

A Glycyl lysine isopeptide (Lys-Gly) (interchain with G-Cter in SUMO2) cross-link involves residue lysine 3. Residues valine 8–proline 79 form the KRAB domain. Residues lysine 98, lysine 179, lysine 182, lysine 209, lysine 215, lysine 224, lysine 239, and lysine 267 each participate in a glycyl lysine isopeptide (Lys-Gly) (interchain with G-Cter in SUMO2) cross-link. 2 C2H2-type zinc fingers span residues tyrosine 269–histidine 291 and tyrosine 297–histidine 319. Residues lysine 309, lysine 323, lysine 337, and lysine 365 each participate in a glycyl lysine isopeptide (Lys-Gly) (interchain with G-Cter in SUMO2) cross-link. 8 C2H2-type zinc fingers span residues tyrosine 325–histidine 347, tyrosine 353–histidine 375, tyrosine 381–histidine 403, tyrosine 409–histidine 431, tyrosine 437–histidine 459, tyrosine 465–histidine 487, tyrosine 493–histidine 515, and tyrosine 521–histidine 543. Residues lysine 544 and lysine 547 each participate in a glycyl lysine isopeptide (Lys-Gly) (interchain with G-Cter in SUMO2) cross-link. 5 C2H2-type zinc fingers span residues tyrosine 549 to histidine 571, tyrosine 577 to histidine 599, tyrosine 605 to histidine 627, phenylalanine 633 to histidine 655, and tyrosine 661 to histidine 683.

It belongs to the krueppel C2H2-type zinc-finger protein family. Widely expressed in various adult tissues and embryonic developmental stages (isoform 3).

The protein resides in the nucleus. Functionally, transcriptional repressor which suppresses activation protein 1 (AP-1)- and serum response element (SRE)-mediated transcriptional activity. In Homo sapiens (Human), this protein is Zinc finger protein 12 (ZNF12).